A 128-amino-acid polypeptide reads, in one-letter code: Small ribosomal subunit protein bS6 (128 aa).

A disordered region spans residues Thr-97–Ala-128. The span at Asp-118 to Ala-128 shows a compositional bias: basic and acidic residues.

It belongs to the bacterial ribosomal protein bS6 family.

Its function is as follows. Binds together with bS18 to 16S ribosomal RNA. This is Small ribosomal subunit protein bS6 from Aromatoleum aromaticum (strain DSM 19018 / LMG 30748 / EbN1) (Azoarcus sp. (strain EbN1)).